Reading from the N-terminus, the 169-residue chain is MSAIPEGSNVTVLNKNEKKAREMISKLGLKKIAGINRVTFRKKDNQIFAIDNPEVYRSQGGNYVVFGEAKIDNFSQKLAAAQEKIQSVSKSPEEIQKDMQLAADQAGDESAKPAAAAEEDDEAPVDAGDLSAEDIELVASQANVSKNKAIKALKEHNGDIVNAIMALSK.

Residues 14–78 (NKNEKKAREM…AKIDNFSQKL (65 aa)) form the NAC-A/B domain. The interval 85 to 128 (IQSVSKSPEEIQKDMQLAADQAGDESAKPAAAAEEDDEAPVDAG) is disordered. Residues 130–169 (LSAEDIELVASQANVSKNKAIKALKEHNGDIVNAIMALSK) enclose the UBA domain.

This sequence belongs to the NAC-alpha family. As to quaternary structure, part of the nascent polypeptide-associated complex (NAC), consisting of EGD2 and EGD1. NAC associates with ribosomes via EGD1.

It localises to the cytoplasm. The protein resides in the nucleus. Its function is as follows. Component of the nascent polypeptide-associated complex (NAC), a dynamic component of the ribosomal exit tunnel, protecting the emerging polypeptides from interaction with other cytoplasmic proteins to ensure appropriate nascent protein targeting. The NAC complex also promotes mitochondrial protein import by enhancing productive ribosome interactions with the outer mitochondrial membrane and blocks the inappropriate interaction of ribosomes translating non-secretory nascent polypeptides with translocation sites in the membrane of the endoplasmic reticulum. EGD2 may also be involved in transcription regulation. This Vanderwaltozyma polyspora (strain ATCC 22028 / DSM 70294 / BCRC 21397 / CBS 2163 / NBRC 10782 / NRRL Y-8283 / UCD 57-17) (Kluyveromyces polysporus) protein is Nascent polypeptide-associated complex subunit alpha (EGD2).